The chain runs to 497 residues: SPI-2 type 3 secretion system secretin (497 aa).

Positions 1 to 20 (MVVNKRLILILLFILNTAKS) are cleaved as a signal peptide.

Belongs to the bacterial secretin family. T3SS SctC subfamily. As to quaternary structure, the core secretion machinery of the T3SS is composed of approximately 20 different proteins, including cytoplasmic components, a base, an export apparatus and a needle. This subunit is part of the base, which anchors the injectisome in the bacterial cell envelope. Forms a stable homooligomeric complex.

Its subcellular location is the cell outer membrane. Its function is as follows. Component of the type III secretion system (T3SS), also called injectisome, which is used to inject bacterial effector proteins into eukaryotic host cells. Forms a ring-shaped multimeric structure with an apparent central pore in the outer membrane. Required for secretion of some type III-secreted effectors including the SpvB exotoxin. This is SPI-2 type 3 secretion system secretin from Salmonella typhimurium (strain 14028s / SGSC 2262).